The following is a 122-amino-acid chain: uncharacterized protein (122 aa).

Residues 1–10 (MGTGLRSQSL) show a composition bias toward polar residues. The tract at residues 1 to 68 (MGTGLRSQSL…GQEWLPGSLG (68 aa)) is disordered. Positions 40-56 (QGREKSRSSDGGPERLD) are enriched in basic and acidic residues.

This is an uncharacterized protein from Bos taurus (Bovine).